The chain runs to 168 residues: RNA pyrophosphohydrolase (168 aa).

Residues P8–K160 form the Nudix hydrolase domain. Residues G47–S68 carry the Nudix box motif.

The protein belongs to the Nudix hydrolase family. RppH subfamily. A divalent metal cation serves as cofactor.

Functionally, accelerates the degradation of transcripts by removing pyrophosphate from the 5'-end of triphosphorylated RNA, leading to a more labile monophosphorylated state that can stimulate subsequent ribonuclease cleavage. In Bradyrhizobium sp. (strain ORS 278), this protein is RNA pyrophosphohydrolase.